The following is a 442-amino-acid chain: C4-dicarboxylate transport protein (442 aa).

The next 8 helical transmembrane spans lie at 10–30, 40–60, 77–97, 149–169, 185–205, 221–241, 288–308, and 354–374; these read VQVLIAIVLGILVGFLFPSFG, FIKLIKMLIAPIIFATVVSGI, LIYFEVVTTFALVIGLVVANI, LLQVLLISVLFGFALTQLGTL, FVILGFVMRLAPIGAFGAMAF, LMVAFYATCLLFVFVVLGLIA, VVGLVVPAGYSFNLDGTSIYL, and AATLSAVGHVPVAGLALILGI. A disordered region spans residues 420–442; it reads PATPEVAAEERGEGRGLDGPLPA.

It belongs to the dicarboxylate/amino acid:cation symporter (DAACS) (TC 2.A.23) family.

The protein localises to the cell membrane. Responsible for the transport of dicarboxylates such as succinate, fumarate, and malate across the membrane. In Deinococcus geothermalis (strain DSM 11300 / CIP 105573 / AG-3a), this protein is C4-dicarboxylate transport protein.